The sequence spans 288 residues: MEFIGKIIGVFLGWKVGGFFGAIAGLILGSIADKKLYELGSVSSSFFKKKTTRQDLFMQTSFAVLGHLSKSKGRVTEEDIQLANQLMIQLKLDDAGRKLAQDAFRRGKESDFPIRQVIREFRIGCGQRADLLRMFLQVQVQAAFADSELHENEKEVLYVIAEELGLSRMQFEQMIAMEMAARAFTQGGFYQKYQQGAYQGGYQYQQQNSGGYQHASGPTLNDAYKVLGVTESDEQSTVKRAYRRLMNEHHPDKLVAKGLPPEMMEMAKEKTQQIQAAYDLICKAKGWK.

The Periplasmic segment spans residues 1–6; sequence MEFIGK. The chain crosses the membrane as a helical span at residues 7-30; sequence IIGVFLGWKVGGFFGAIAGLILGS. Over 31–288 the chain is Cytoplasmic; sequence IADKKLYELG…DLICKAKGWK (258 aa). A J domain is found at 222-288; sequence DAYKVLGVTE…DLICKAKGWK (67 aa).

As to quaternary structure, homodimer.

It is found in the cell inner membrane. Functionally, regulatory DnaK co-chaperone. Direct interaction between DnaK and DjlA is needed for the induction of the wcaABCDE operon, involved in the synthesis of a colanic acid polysaccharide capsule, possibly through activation of the RcsB/RcsC phosphotransfer signaling pathway. The colanic acid capsule may help the bacterium survive conditions outside the host. This Haemophilus influenzae (strain ATCC 51907 / DSM 11121 / KW20 / Rd) protein is Co-chaperone protein DjlA.